The primary structure comprises 428 residues: MIIFKNLILKISSLRFAISLIIFIAITSGIGTFIPQGNSNKFYIDNFDSAPIFGFLDGEKVLKLQLDHIYTSIWFLFTLILLCISLSACSFRRQIPSLKASLKWIEYNNEKKFSKLQLTSSHPINQDGDHISKVDLLLKKRGWKTYKFKSHISARRGLIGKIGPLVVHIGLIVLLLGSAYGSFTSQSNEQYLLPGESLDLVNESTNSKANIKLVNFSIERESDGIPKQFISKLNFSSEDLNINEIKTAKVNHPIRFKGLTIYQADWAISNVVLEIDNILYQLQLKEIPEIGNQVWGVLVELGSETKKNFLLTIDNENGPLKISNVENFSGNNLYINDRPLEVNSSKVSLKKIIPSSGLIIKNDPSIPFIYFSFILIIFGTIISLIPTNQLWIFVNKESHKLSIGGLSNKNLVGFKKEFFKLSEEIKNF.

Helical transmembrane passes span 14–34 (LRFA…GTFI), 72–92 (SIWF…CSFR), and 162–182 (IGPL…AYGS).

This sequence belongs to the Ccs1/CcsB family. In terms of assembly, may interact with CcsA.

It is found in the cellular thylakoid membrane. Its function is as follows. Required during biogenesis of c-type cytochromes (cytochrome c6 and cytochrome f) at the step of heme attachment. In Prochlorococcus marinus (strain MIT 9312), this protein is Cytochrome c biogenesis protein CcsB.